Reading from the N-terminus, the 267-residue chain is MADEAPARSGFRGGFGSRGGRGGRGRGRGRWARGRGKEDSKEWVPVTKLGRLVREGKIKSLEEIYLYSLPIKEFEIIDFFLGSSLKDEVLKIMPVQKQTRAGQRTRFKAFVAIGDNNGHIGLGVKCSKEVATAIRGAIILAKLSVVPVRRGYWGNKIGKPHTVPCKVTGKCGSVSVRLIPAPRGTGIVSAPVPKKLLTMAGIEDCYTSARGSTGTLGNFAKATYAAIAKTYAYLTPDLWKEMPLGSTPYQAYSDFLSKPTPRLHADA.

Residues 1–37 form a disordered region; that stretch reads MADEAPARSGFRGGFGSRGGRGGRGRGRGRWARGRGK. The segment covering 11 to 20 has biased composition (gly residues); that stretch reads FRGGFGSRGG. The segment covering 21 to 34 has biased composition (basic residues); the sequence is RGGRGRGRGRWARG. A Phosphoserine modification is found at Ser60. In terms of domain architecture, S5 DRBM spans 85 to 148; the sequence is LKDEVLKIMP…ILAKLSVVPV (64 aa).

Belongs to the universal ribosomal protein uS5 family.

Component of the ribosome, a large ribonucleoprotein complex responsible for the synthesis of proteins in the cell. The small ribosomal subunit (SSU) binds messenger RNAs (mRNAs) and translates the encoded message by selecting cognate aminoacyl-transfer RNA (tRNA) molecules. The large subunit (LSU) contains the ribosomal catalytic site termed the peptidyl transferase center (PTC), which catalyzes the formation of peptide bonds, thereby polymerizing the amino acids delivered by tRNAs into a polypeptide chain. The nascent polypeptides leave the ribosome through a tunnel in the LSU and interact with protein factors that function in enzymatic processing, targeting, and the membrane insertion of nascent chains at the exit of the ribosomal tunnel. Plays a role in the assembly and function of the 40S ribosomal subunit. Mutations in this protein affects the control of translational fidelity. Involved in nucleolar processing of pre-18S ribosomal RNA and ribosome assembly. Has a specific developmental role during oogenesis. The sequence is that of Small ribosomal subunit protein uS5 (RpS2) from Drosophila melanogaster (Fruit fly).